Reading from the N-terminus, the 94-residue chain is Enhancer of yellow 2 transcription factor (94 aa).

Belongs to the ENY2 family. As to quaternary structure, component of the nuclear pore complex (NPC)-associated AMEX complex (anchoring and mRNA export complex), composed of at least e(y)2 and xmas-2. Component of the SAGA transcription coactivator-HAT complexes, at least composed of Ada2b, e(y)2, Pcaf/Gcn5, Taf10 and Nipped-A/Trrap. Within the SAGA complex, e(y)2, Sgf11, and not/nonstop form an additional subcomplex of SAGA called the DUB module (deubiquitination module). Component of the THO complex, composed of at least e(y)2, HPR1, THO2, THOC5, THOC6 and THOC7. Interacts with e(y)1. Interacts with su(Hw) (via zinc fingers). Interacts with xmas-2; required for localization to the nuclear periphery. Interacts with the nuclear pore complex (NPC).

It localises to the nucleus. It is found in the nucleoplasm. The protein resides in the cytoplasm. Involved in mRNA export coupled transcription activation by association with both the AMEX and the SAGA complexes. The SAGA complex is a multiprotein complex that activates transcription by remodeling chromatin and mediating histone acetylation and deubiquitination. Within the SAGA complex, participates in a subcomplex that specifically deubiquitinates histone H2B. The SAGA complex is recruited to specific gene promoters by activators, where it is required for transcription. Required for nuclear receptor-mediated transactivation. Involved in transcription elongation by recruiting the THO complex onto nascent mRNA. The AMEX complex functions in docking export-competent ribonucleoprotein particles (mRNPs) to the nuclear entrance of the nuclear pore complex (nuclear basket). AMEX participates in mRNA export and accurate chromatin positioning in the nucleus by tethering genes to the nuclear periphery. This chain is Enhancer of yellow 2 transcription factor, found in Drosophila grimshawi (Hawaiian fruit fly).